The sequence spans 279 residues: D-aminoacyl-tRNA deacylase (279 aa).

The segment at 81–100 is disordered; it reads GRKSLTVHHPGNPTEDNSLG.

The protein belongs to the DtdA deacylase family. Monomer. Zn(2+) serves as cofactor.

The catalysed reaction is a D-aminoacyl-tRNA + H2O = a tRNA + a D-alpha-amino acid + H(+). The enzyme catalyses glycyl-tRNA(Ala) + H2O = tRNA(Ala) + glycine + H(+). Its function is as follows. D-aminoacyl-tRNA deacylase with broad substrate specificity. By recycling D-aminoacyl-tRNA to D-amino acids and free tRNA molecules, this enzyme counteracts the toxicity associated with the formation of D-aminoacyl-tRNA entities in vivo. This Aeropyrum pernix (strain ATCC 700893 / DSM 11879 / JCM 9820 / NBRC 100138 / K1) protein is D-aminoacyl-tRNA deacylase.